The primary structure comprises 744 residues: Collagen alpha-1(VIII) chain (744 aa).

The signal sequence occupies residues 1-27 (MAVLPGPLQLLGVLLTISLSSIRLIQA). The tract at residues 29 to 117 (AYYGIKPLPP…GKEIPLASLR (89 aa)) is nonhelical region (NC2). Disordered stretches follow at residues 115–393 (SLRG…GEPG) and 459–589 (GPKG…PDMG). Residues 118 to 571 (GEQGPRGEPG…PGPPGPPGPP (454 aa)) form a triple-helical region (COL1) region. The span at 128–137 (PRGPPGPPGL) shows a compositional bias: pro residues. The span at 168–178 (KPGAMGMPGAK) shows a compositional bias: low complexity. 2 stretches are compositionally biased toward gly residues: residues 203 to 217 (GLPGIGKPGGPGLPG) and 328 to 337 (GFPGGKGEQG). Composition is skewed to low complexity over residues 466-496 (QKGVPGLPGVPGLLGPKGEPGIPGDQGLQGP) and 538-556 (AGLHGPPGKPGALGPQGQP). Over residues 558-581 (LPGPPGPPGPPGPPAVMPPTPPPQ) the composition is skewed to pro residues. Positions 572-744 (AVMPPTPPPQ…SFSGYLLYPM (173 aa)) are nonhelical region (NC1). Residues 611-744 (PAYEMPAFTA…SFSGYLLYPM (134 aa)) enclose the C1q domain.

As to quaternary structure, homotrimers, or heterotrimers in association with alpha 2(VIII) type collagens. Four homotrimers can form a tetrahedron stabilized by central interacting C-terminal NC1 trimers. In terms of processing, prolines at the third position of the tripeptide repeating unit (G-X-Y) are hydroxylated in some or all of the chains. Proteolytically cleaved by neutrophil elastase, in vitro. Proteolytic processing produces the C-terminal NC1 domain fragment, vastatin. In terms of tissue distribution, expressed primarily in the subendothelium of large blood vessels. Also expressed in arterioles and venules in muscle, heart, kidney, spleen, umbilical cord, liver and lung and is also found in connective tissue layers around hair follicles, around nerve bundles in muscle, in the dura of the optic nerve, in cornea and sclera, and in the perichondrium of cartilaginous tissues. In the kidney, expressed in mesangial cells, glomerular endothelial cells, and tubular epithelial cells. Also expressed in mast cells, and in astrocytes during the repair process. Expressed in Descemet's membrane. Specifically expressed in peritoneal fibroblasts and mesothelial cells.

The protein localises to the secreted. The protein resides in the extracellular space. Its subcellular location is the extracellular matrix. It localises to the basement membrane. In terms of biological role, macromolecular component of the subendothelium. Major component of the Descemet's membrane (basement membrane) of corneal endothelial cells. Also a component of the endothelia of blood vessels. Necessary for migration and proliferation of vascular smooth muscle cells and thus, has a potential role in the maintenance of vessel wall integrity and structure, in particular in atherogenesis. Functionally, vastatin, the C-terminal fragment comprising the NC1 domain, inhibits aortic endothelial cell proliferation and causes cell apoptosis. The polypeptide is Collagen alpha-1(VIII) chain (COL8A1) (Homo sapiens (Human)).